Consider the following 317-residue polypeptide: Ribosomal RNA small subunit methyltransferase H (317 aa).

Residues Gly-39–His-41, Asp-59, Phe-83, Asp-104, and Gln-111 contribute to the S-adenosyl-L-methionine site.

The protein belongs to the methyltransferase superfamily. RsmH family.

Its subcellular location is the cytoplasm. It carries out the reaction cytidine(1402) in 16S rRNA + S-adenosyl-L-methionine = N(4)-methylcytidine(1402) in 16S rRNA + S-adenosyl-L-homocysteine + H(+). In terms of biological role, specifically methylates the N4 position of cytidine in position 1402 (C1402) of 16S rRNA. The chain is Ribosomal RNA small subunit methyltransferase H from Paraburkholderia phymatum (strain DSM 17167 / CIP 108236 / LMG 21445 / STM815) (Burkholderia phymatum).